Reading from the N-terminus, the 337-residue chain is tRNA(Ile)-lysidine synthase (337 aa).

40–45 (SGGQDS) lines the ATP pocket.

This sequence belongs to the tRNA(Ile)-lysidine synthase family.

Its subcellular location is the cytoplasm. It catalyses the reaction cytidine(34) in tRNA(Ile2) + L-lysine + ATP = lysidine(34) in tRNA(Ile2) + AMP + diphosphate + H(+). In terms of biological role, ligates lysine onto the cytidine present at position 34 of the AUA codon-specific tRNA(Ile) that contains the anticodon CAU, in an ATP-dependent manner. Cytidine is converted to lysidine, thus changing the amino acid specificity of the tRNA from methionine to isoleucine. The sequence is that of tRNA(Ile)-lysidine synthase from Parasynechococcus marenigrum (strain WH8102).